The chain runs to 268 residues: tRNA pseudouridine synthase A (268 aa).

The Nucleophile role is filled by aspartate 52. Substrate is bound at residue tyrosine 110.

This sequence belongs to the tRNA pseudouridine synthase TruA family. As to quaternary structure, homodimer.

The enzyme catalyses uridine(38/39/40) in tRNA = pseudouridine(38/39/40) in tRNA. Formation of pseudouridine at positions 38, 39 and 40 in the anticodon stem and loop of transfer RNAs. The protein is tRNA pseudouridine synthase A of Prochlorococcus marinus (strain MIT 9515).